A 379-amino-acid polypeptide reads, in one-letter code: Odorant receptor 23a (379 aa).

The Cytoplasmic segment spans residues 1–36; it reads MKLSETLKIDYFRVQLNAWRICGALDLSEGRYWSWS. Residues 37-57 traverse the membrane as a helical segment; sequence MLLCILVYLPTPMLLRGVYSF. The Extracellular segment spans residues 58 to 64; that stretch reads EDPVENN. Residue N64 is glycosylated (N-linked (GlcNAc...) asparagine). The chain crosses the membrane as a helical span at residues 65 to 85; it reads FSLSLTVTSLSNLMKFCMYVA. Over 86–125 the chain is Cytoplasmic; it reads QLTKMVEVQSLIGQLDARVSGESQSERHRNMTEHLLRMSK. A helical membrane pass occupies residues 126–146; that stretch reads LFQITYAVVFIIAAVPFVFET. Residues 147–162 lie on the Extracellular side of the membrane; the sequence is ELSLPMPMWFPFDWKN. A helical transmembrane segment spans residues 163-183; that stretch reads SMVAYIGALVFQEIGYVFQIM. Over 184–253 the chain is Cytoplasmic; it reads QCFAADSFPP…TKSLVSYPMM (70 aa). A helical transmembrane segment spans residues 254-274; the sequence is VQFMVIGINIAITLFVLIFYV. At 275-280 the chain is on the extracellular side; sequence ETLYDR. The helical transmembrane segment at 281 to 301 threads the bilayer; that stretch reads IYYLCFLLGITVQTYPLCYYG. Residues 302 to 340 lie on the Cytoplasmic side of the membrane; the sequence is TMVQESFAELHYAVFCSNWVDQSASYRGHMLILAERTKR. A helical transmembrane segment spans residues 341–361; that stretch reads MQLLLAGNLVPIHLSTYVACW. Residues 362 to 379 lie on the Extracellular side of the membrane; sequence KGAYSFFTLMADRDGLGS.

Belongs to the insect chemoreceptor superfamily. Heteromeric odorant receptor channel (TC 1.A.69) family. Or2a subfamily. Interacts with Orco. Complexes exist early in the endomembrane system in olfactory sensory neurons (OSNs), coupling these complexes to the conserved ciliary trafficking pathway. In terms of tissue distribution, expressed in 10-40 sensory cells in the third antenna segment and in the maxillary palp.

The protein localises to the cell membrane. Functionally, odorant receptor which mediates acceptance or avoidance behavior, depending on its substrates. The odorant receptor repertoire encodes a large collection of odor stimuli that vary widely in identity, intensity, and duration. May form a complex with Orco to form odorant-sensing units, providing sensitive and prolonged odorant signaling and calcium permeability. The chain is Odorant receptor 23a (Or23a) from Drosophila melanogaster (Fruit fly).